The primary structure comprises 252 residues: Hydroxyacylglutathione hydrolase (252 aa).

Residues histidine 54, histidine 56, aspartate 58, histidine 59, histidine 111, aspartate 128, and histidine 166 each coordinate Zn(2+).

This sequence belongs to the metallo-beta-lactamase superfamily. Glyoxalase II family. Monomer. It depends on Zn(2+) as a cofactor.

It carries out the reaction an S-(2-hydroxyacyl)glutathione + H2O = a 2-hydroxy carboxylate + glutathione + H(+). It participates in secondary metabolite metabolism; methylglyoxal degradation; (R)-lactate from methylglyoxal: step 2/2. Its function is as follows. Thiolesterase that catalyzes the hydrolysis of S-D-lactoyl-glutathione to form glutathione and D-lactic acid. This Vibrio vulnificus (strain CMCP6) protein is Hydroxyacylglutathione hydrolase.